We begin with the raw amino-acid sequence, 830 residues long: Venom phosphodiesterase (830 aa).

SMB domains follow at residues proline 7–threonine 50 and glutamine 51–serine 95. 16 cysteine pairs are disulfide-bonded: cysteine 11-cysteine 15, cysteine 11-cysteine 28, cysteine 15-cysteine 46, cysteine 26-cysteine 28, cysteine 26-cysteine 39, cysteine 32-cysteine 38, cysteine 39-cysteine 46, cysteine 55-cysteine 60, cysteine 55-cysteine 72, cysteine 60-cysteine 90, cysteine 70-cysteine 72, cysteine 70-cysteine 83, cysteine 76-cysteine 82, cysteine 83-cysteine 90, cysteine 101-cysteine 147, and cysteine 109-cysteine 321. N-linked (GlcNAc...) asparagine glycosylation occurs at asparagine 16. The Cell attachment site signature appears at arginine 35–alanine 37. A divalent metal cation contacts are provided by aspartate 124 and threonine 162. Catalysis depends on threonine 162, which acts as the AMP-threonine intermediate. Asparagine 193, asparagine 236, and asparagine 247 each carry an N-linked (GlcNAc...) asparagine glycan. Lysine 248 provides a ligand contact to AMP. A divalent metal cation contacts are provided by aspartate 282, histidine 286, aspartate 329, and histidine 330. Histidine 286 lines the AMP pocket. Disulfide bonds link cysteine 337–cysteine 434, cysteine 385–cysteine 772, cysteine 518–cysteine 575, cysteine 531–cysteine 632, cysteine 533–cysteine 617, and cysteine 740–cysteine 750. Histidine 439 is an a divalent metal cation binding site. Asparagine 489 carries an N-linked (GlcNAc...) asparagine glycan. N-linked (GlcNAc...) asparagine glycans are attached at residues asparagine 723 and asparagine 742.

Belongs to the nucleotide pyrophosphatase/phosphodiesterase family. As to quaternary structure, monomer cleaved in two subunits; disulfide-linked. Is synthesized as a single-chain protein and is subsequently cleaved to form a two-subunit protein held together with disulfide bonds. Requires a divalent metal cation as cofactor. Expressed by venom gland.

It is found in the secreted. The catalysed reaction is ADP + H2O = AMP + phosphate + H(+). Functionally, hydrolyzes ADP with high activity. Shows weak or no activity on 5'-AMP, 5'-GMP, 3'-AMP, ATP, cAMP, and cGMP. Is devoid of monophosphatase and proteinase activities. Dose-dependently inhibits platelet aggregation induced by ADP and collagen. In Naja atra (Chinese cobra), this protein is Venom phosphodiesterase.